Consider the following 220-residue polypeptide: FMN-dependent NADH:quinone oxidoreductase 1 (220 aa).

Position 18–20 (18–20 (SVS)) interacts with FMN.

This sequence belongs to the azoreductase type 1 family. Homodimer. Requires FMN as cofactor.

The catalysed reaction is 2 a quinone + NADH + H(+) = 2 a 1,4-benzosemiquinone + NAD(+). It catalyses the reaction N,N-dimethyl-1,4-phenylenediamine + anthranilate + 2 NAD(+) = 2-(4-dimethylaminophenyl)diazenylbenzoate + 2 NADH + 2 H(+). Functionally, quinone reductase that provides resistance to thiol-specific stress caused by electrophilic quinones. Its function is as follows. Also exhibits azoreductase activity. Catalyzes the reductive cleavage of the azo bond in aromatic azo compounds to the corresponding amines. The chain is FMN-dependent NADH:quinone oxidoreductase 1 from Bacillus anthracis.